The primary structure comprises 281 residues: Glyoxalase 1 (281 aa).

VOC domains lie at 4 to 127 and 132 to 251; these read RALH…IGKA and KVLR…FVGD.

Belongs to the glyoxalase I family.

In terms of biological role, thought to act as a glyoxalase. May remove methylglyoxal from mitochondrial proteins. Has roles in reducing oxidative stress and increasing lifespan. This is Glyoxalase 1 from Caenorhabditis briggsae.